Consider the following 620-residue polypeptide: Chaperone protein HscA homolog (620 aa).

Belongs to the heat shock protein 70 family.

In terms of biological role, chaperone involved in the maturation of iron-sulfur cluster-containing proteins. Has a low intrinsic ATPase activity which is markedly stimulated by HscB. The polypeptide is Chaperone protein HscA homolog (Bordetella pertussis (strain Tohama I / ATCC BAA-589 / NCTC 13251)).